We begin with the raw amino-acid sequence, 86 residues long: Exodeoxyribonuclease 7 small subunit (86 aa).

A disordered region spans residues 1–26 (MQDELFETEKAPQKNTKNAKNAPKKS).

The protein belongs to the XseB family. Heterooligomer composed of large and small subunits.

Its subcellular location is the cytoplasm. It catalyses the reaction Exonucleolytic cleavage in either 5'- to 3'- or 3'- to 5'-direction to yield nucleoside 5'-phosphates.. Functionally, bidirectionally degrades single-stranded DNA into large acid-insoluble oligonucleotides, which are then degraded further into small acid-soluble oligonucleotides. The chain is Exodeoxyribonuclease 7 small subunit from Helicobacter pylori (strain Shi470).